Reading from the N-terminus, the 119-residue chain is QDWSSFQNKHIDYPETSASNPNAYCDLMMQRRNLNPTKCKTRNTFVHASPSEIQQVCGSGGTHYEDNLYDSNESFDLTDCKNVGGTAPSSCKYNGTPGTKRIRIACENNQPVHFELVLS.

At Q1 the chain carries Pyrrolidone carboxylic acid. H10 functions as the Proton acceptor in the catalytic mechanism. 3 disulfides stabilise this stretch: C25–C80, C39–C91, and C57–C106. 40–44 (KTRNT) is a substrate binding site. Catalysis depends on H113, which acts as the Proton donor.

The protein belongs to the pancreatic ribonuclease family. Monomer. Interacts with and forms tight 1:1 complexes with RNH1. Dimerization of two such complexes may occur. Interaction with RNH1 inhibits this protein. As to expression, pancreas.

It localises to the secreted. It catalyses the reaction an [RNA] containing cytidine + H2O = an [RNA]-3'-cytidine-3'-phosphate + a 5'-hydroxy-ribonucleotide-3'-[RNA].. The enzyme catalyses an [RNA] containing uridine + H2O = an [RNA]-3'-uridine-3'-phosphate + a 5'-hydroxy-ribonucleotide-3'-[RNA].. Functionally, endonuclease that catalyzes the cleavage of RNA on the 3' side of pyrimidine nucleotides. Acts on single-stranded and double-stranded RNA. This chain is Ribonuclease pancreatic, found in Iguana iguana (Common iguana).